A 100-amino-acid polypeptide reads, in one-letter code: NADH-quinone oxidoreductase subunit K 2 (100 aa).

3 helical membrane passes run 4–24, 29–49, and 60–80; these read LNNY…GVLV, IVIF…FIAF, and IFVF…LALM.

This sequence belongs to the complex I subunit 4L family. NDH-1 is composed of 14 different subunits. Subunits NuoA, H, J, K, L, M, N constitute the membrane sector of the complex.

It localises to the cell inner membrane. The catalysed reaction is a quinone + NADH + 5 H(+)(in) = a quinol + NAD(+) + 4 H(+)(out). Functionally, NDH-1 shuttles electrons from NADH, via FMN and iron-sulfur (Fe-S) centers, to quinones in the respiratory chain. The immediate electron acceptor for the enzyme in this species is believed to be ubiquinone. Couples the redox reaction to proton translocation (for every two electrons transferred, four hydrogen ions are translocated across the cytoplasmic membrane), and thus conserves the redox energy in a proton gradient. In Geotalea uraniireducens (strain Rf4) (Geobacter uraniireducens), this protein is NADH-quinone oxidoreductase subunit K 2.